We begin with the raw amino-acid sequence, 196 residues long: MALVPIVVEQTSKGERSYDIYSRLLKERIIFLTGQVEDHMANLIVAQMLFLEAEDPEKDIYLYINSPGGVVTAGLAIYDTMNFIKPDVATLCTGQACSMGAFLLSGGAKGKRFALPNARVMIHQPLGGARGQATDIQIQAQEILKLKEMLTRKMAEHSGQPFEKVAADTERDNFMSAVEAMEYGLIDKVLTHRDMK.

Ser98 functions as the Nucleophile in the catalytic mechanism. The active site involves His123.

It belongs to the peptidase S14 family. Fourteen ClpP subunits assemble into 2 heptameric rings which stack back to back to give a disk-like structure with a central cavity, resembling the structure of eukaryotic proteasomes.

The protein localises to the cytoplasm. The enzyme catalyses Hydrolysis of proteins to small peptides in the presence of ATP and magnesium. alpha-casein is the usual test substrate. In the absence of ATP, only oligopeptides shorter than five residues are hydrolyzed (such as succinyl-Leu-Tyr-|-NHMec, and Leu-Tyr-Leu-|-Tyr-Trp, in which cleavage of the -Tyr-|-Leu- and -Tyr-|-Trp bonds also occurs).. Functionally, cleaves peptides in various proteins in a process that requires ATP hydrolysis. Has a chymotrypsin-like activity. Plays a major role in the degradation of misfolded proteins. This Actinobacillus pleuropneumoniae serotype 5b (strain L20) protein is ATP-dependent Clp protease proteolytic subunit.